The primary structure comprises 301 residues: ATP synthase gamma chain (301 aa).

It belongs to the ATPase gamma chain family. As to quaternary structure, F-type ATPases have 2 components, CF(1) - the catalytic core - and CF(0) - the membrane proton channel. CF(1) has five subunits: alpha(3), beta(3), gamma(1), delta(1), epsilon(1). CF(0) has three main subunits: a, b and c.

Its subcellular location is the cell inner membrane. Produces ATP from ADP in the presence of a proton gradient across the membrane. The gamma chain is believed to be important in regulating ATPase activity and the flow of protons through the CF(0) complex. The sequence is that of ATP synthase gamma chain from Bordetella petrii (strain ATCC BAA-461 / DSM 12804 / CCUG 43448).